Consider the following 705-residue polypeptide: Calpain-1 catalytic subunit (705 aa).

The region spanning 48 to 347 (LFRDPQFPAG…FSRLEICNLT (300 aa)) is the Calpain catalytic domain. Catalysis depends on residues Cys-108, His-265, and Asn-289. A domain III region spans residues 348 to 517 (PDALTKDELS…KQSDTAELDE (170 aa)). The tract at residues 518-533 (EISADLADEEEITEDD) is linker. The EF-hand 1 domain maps to 530-565 (TEDDIEDGFKNMFQQLAGEDMEISVFELKTILNRVI). A domain IV region spans residues 534–704 (IEDGFKNMFQ…LAEWLLLTMC (171 aa)). Ca(2+)-binding residues include Asp-549, Glu-551, Glu-556, Asp-589, Asp-591, Ser-593, Arg-595, Glu-600, Asp-619, Asp-621, Ser-623, Thr-625, and Glu-630. EF-hand domains lie at 606 to 641 (NKIR…AGFK) and 671 to 705 (VKLE…TMCG).

This sequence belongs to the peptidase C2 family. In terms of assembly, heterodimer of large (catalytic) and a small (regulatory) subunit. Ca(2+) serves as cofactor. Post-translationally, the N-terminus is blocked. As to expression, ubiquitously expressed.

Its subcellular location is the cytoplasm. It is found in the cell membrane. It carries out the reaction Broad endopeptidase specificity.. Activated by micromolar concentrations of calcium and inhibited by calpastatin. Calcium-regulated non-lysosomal thiol-protease which catalyze limited proteolysis of substrates involved in cytoskeletal remodeling and signal transduction. The polypeptide is Calpain-1 catalytic subunit (Gallus gallus (Chicken)).